The primary structure comprises 385 residues: MFEKPLGMRDTFPQIFEKVEAVRQTGRDFLTKRGYEFIKTPAVEYFDTVGKASAIADTHLFKLVDSQGNTLVLRPDMTTPIARVATSKLLKEMIPQRLAYFASVFRAQEAEGGRPAEFDQMGIELIGDQSVFADAEVIVTAMELLKHLKLEAFKVTIGHAGILNCILQDYTESIEQQTTLRTLLVHRNYVGFEEAVDSFNLPKAKADALLQFIEEAMDVKDIRDIEKYVRKNDALVYMQQLAQLLEMADLAAYVTFDFTLSSHMSYYTGMLFEVFALGSGFPLGNGGRYDGLLEVFGSKAGATGFSIRVDRLLETLHGQSEMQQEATVVLFDEEQFEAALIKVNTLRAAGKLATLQLRSSLVDEEAFLAHFTEVVVVGQEEIGSE.

The protein belongs to the class-II aminoacyl-tRNA synthetase family. HisZ subfamily. In terms of assembly, heteromultimer composed of HisG and HisZ subunits.

The protein resides in the cytoplasm. It functions in the pathway amino-acid biosynthesis; L-histidine biosynthesis; L-histidine from 5-phospho-alpha-D-ribose 1-diphosphate: step 1/9. Functionally, required for the first step of histidine biosynthesis. May allow the feedback regulation of ATP phosphoribosyltransferase activity by histidine. The polypeptide is ATP phosphoribosyltransferase regulatory subunit (Lysinibacillus sphaericus (strain C3-41)).